Reading from the N-terminus, the 234-residue chain is CHD1 helical C-terminal domain containing protein 1 (234 aa).

Residues 1 to 38 (MEASDGQADEREEPLEQGTNARSLERRSSTTPAKDSLV) are disordered. Residues 44-145 (LDRDTFKICK…NNQTTKFLMA (102 aa)) form a CHD1 helical C-terminal domain (CHCT) region. The tract at residues 200 to 234 (LRARGPRRRGSKLPQEPKLKRRRIKEAPDTPETCL) is disordered.

The protein resides in the cytoplasm. It is found in the nucleus. Its function is as follows. May play a role in regulation of apoptosis. The chain is CHD1 helical C-terminal domain containing protein 1 (CHCT1) from Bos taurus (Bovine).